The sequence spans 167 residues: Gametocyte-specific factor 1 (167 aa).

S8 is subject to Phosphoserine. CHHC U11-48K-type zinc fingers lie at residues L14 to H41 and L48 to S75. Residues C17, H23, H33, C37, C51, H57, H67, and C71 each coordinate Zn(2+).

This sequence belongs to the UPF0224 (FAM112) family.

Its subcellular location is the cytoplasm. Its function is as follows. Required for spermatogenesis and is involved in the suppression of retrotransposon transcription in male germ cells. In Homo sapiens (Human), this protein is Gametocyte-specific factor 1 (GTSF1).